The primary structure comprises 207 residues: Protein GrpE (207 aa).

Residues 1–31 are disordered; that stretch reads MSEHQTPPEEDLTVANGDSAEAVSEPDVTVA.

This sequence belongs to the GrpE family. Homodimer.

The protein resides in the cytoplasm. Participates actively in the response to hyperosmotic and heat shock by preventing the aggregation of stress-denatured proteins, in association with DnaK and GrpE. It is the nucleotide exchange factor for DnaK and may function as a thermosensor. Unfolded proteins bind initially to DnaJ; upon interaction with the DnaJ-bound protein, DnaK hydrolyzes its bound ATP, resulting in the formation of a stable complex. GrpE releases ADP from DnaK; ATP binding to DnaK triggers the release of the substrate protein, thus completing the reaction cycle. Several rounds of ATP-dependent interactions between DnaJ, DnaK and GrpE are required for fully efficient folding. The chain is Protein GrpE from Synechococcus elongatus (strain ATCC 33912 / PCC 7942 / FACHB-805) (Anacystis nidulans R2).